Consider the following 157-residue polypeptide: SsrA-binding protein (157 aa).

The span at 134–151 shows a compositional bias: basic and acidic residues; it reads HDKRETEKKRDWSKEKGR. A disordered region spans residues 134–157; the sequence is HDKRETEKKRDWSKEKGRLMRAKG.

This sequence belongs to the SmpB family.

Its subcellular location is the cytoplasm. Its function is as follows. Required for rescue of stalled ribosomes mediated by trans-translation. Binds to transfer-messenger RNA (tmRNA), required for stable association of tmRNA with ribosomes. tmRNA and SmpB together mimic tRNA shape, replacing the anticodon stem-loop with SmpB. tmRNA is encoded by the ssrA gene; the 2 termini fold to resemble tRNA(Ala) and it encodes a 'tag peptide', a short internal open reading frame. During trans-translation Ala-aminoacylated tmRNA acts like a tRNA, entering the A-site of stalled ribosomes, displacing the stalled mRNA. The ribosome then switches to translate the ORF on the tmRNA; the nascent peptide is terminated with the 'tag peptide' encoded by the tmRNA and targeted for degradation. The ribosome is freed to recommence translation, which seems to be the essential function of trans-translation. The polypeptide is SsrA-binding protein (Rhodopseudomonas palustris (strain BisA53)).